Reading from the N-terminus, the 216-residue chain is Probable transaldolase (216 aa).

Lys-84 serves as the catalytic Schiff-base intermediate with substrate.

This sequence belongs to the transaldolase family. Type 3B subfamily.

Its subcellular location is the cytoplasm. It catalyses the reaction D-sedoheptulose 7-phosphate + D-glyceraldehyde 3-phosphate = D-erythrose 4-phosphate + beta-D-fructose 6-phosphate. It participates in carbohydrate degradation; pentose phosphate pathway; D-glyceraldehyde 3-phosphate and beta-D-fructose 6-phosphate from D-ribose 5-phosphate and D-xylulose 5-phosphate (non-oxidative stage): step 2/3. In terms of biological role, transaldolase is important for the balance of metabolites in the pentose-phosphate pathway. This chain is Probable transaldolase, found in Lysinibacillus sphaericus (strain C3-41).